The following is a 1391-amino-acid chain: MNLLNLFNPLQTAGMEEEFDAIKIGIASPETIRSWSYGEVKKPETINYRTFKPERDGLFCAKIFGPVKDYECLCGKYKRLKFKGVTCEKCGVEVTLSKVRRERMGHIELAAPVAHIWFLKSLPSRLGMVLDMTLRDIERVLYFEAFVVTDPGMTPLQRRQLLTEDDYYNKLDEYGDDFDAKMGAEGIRELLRTLNVAGEIEILRQELESTGSDTKIKKIAKRLKVLEAFHRSGMKLEWMIMDVLPVLPPDLRPLVPLDGGRFATSDLNDLYRRVINRNNRLKRLLELHAPDIIVRNEKRMLQEAVDSLLDNGRRGKAMTGANKRPLKSLADMIKGKGGRFRQNLLGKRVDYSGRSVITVGPYLRLHQCGLPKKMALELFKPFIFHKLEKQGLASTVKAAKKLVEQEVPEVWDILEEVIREHPIMLNRAPTLHRLGIQAFEPILIEGKAIQLHPLVCAAFNADFDGDQMAVHVPLSLEAQMEARTLMLASNNVLSPANGEPIIVPSQDIVLGLYYMTRDRINAKGEGSLFADVKEVHRAYHTKQVELGTKITVRLREWVKNEAGEFEPVVNRYETTVGRALLSEILPKGLPFEYVNKALKKKEISKLINASFRLCGLRDTVIFADHLMYTGFGFAAKGGISIAVDDMEIPKEKVALLAEANAEVKEIEDQYRQGLVTNGERYNKVVDIWGRAGDKIAKAMMDNLSKQKVIDRDGNEVDQESFNSIYMMADSGARGSAAQIKQLSGMRGLMAKPDGSIIETPITSNFREGLTVLQYFIATHGARKGLADTALKTANSGYLTRRLVDVTQDLVVVEDDCGTSDGFVMKAVVQGGDVIEALRERILGRVTASDVVDPSSGETLVEAGTLLTEKLVDMIDQSGVDEVKVRTPITCKTRHGLCAHCYGRDLARGKLVNAGEAVGVIAAQSIGEPGTQLTMRTFHIGGAASRAAAASQVEAKSNGTARFSSQMRYVANNKGELVVIGRSCEVVIHDDIGRERERHKVPYGAILLVQDGMAIKAGQTLATWDPHTRPMITEHAGMVKFENVEEGVTVAKQTDDVTGLSTLVVIDGKRRSSSASKLLRPTVKLLDENGVEICIPGTSTPVSMAFPVGAVITVREGQEIGKGDVLARIPQASSKTRDITGGLPRVAELFEARVPKDAGMLAEITGTVSFGKETKGKQRLIITDVDGVAYETLISKEKQILVHDGQVVNRGETIVDGAVDPHDILRLQGIEALARYIVQEVQEVYRLQGVKISDKHIEVIIRQMLRRVNIADAGETGFITGEQVERGDVMAANEKALEEGKEPARYENVLLGITKASLSTDSFISAASFQETTRVLTEAAIMGKQDELRGLKENVIVGRLIPAGTGLTYHRSRHQQWQEVEQETAETQVTDE.

Zn(2+)-binding residues include C72, C74, C87, and C90. The Mg(2+) site is built by D462, D464, and D466. Zn(2+) contacts are provided by C816, C890, C897, and C900.

This sequence belongs to the RNA polymerase beta' chain family. In terms of assembly, the RNAP catalytic core consists of 2 alpha, 1 beta, 1 beta' and 1 omega subunit. When a sigma factor is associated with the core the holoenzyme is formed, which can initiate transcription. Mg(2+) is required as a cofactor. The cofactor is Zn(2+).

It carries out the reaction RNA(n) + a ribonucleoside 5'-triphosphate = RNA(n+1) + diphosphate. Functionally, DNA-dependent RNA polymerase catalyzes the transcription of DNA into RNA using the four ribonucleoside triphosphates as substrates. The protein is DNA-directed RNA polymerase subunit beta' of Neisseria meningitidis serogroup C / serotype 2a (strain ATCC 700532 / DSM 15464 / FAM18).